Consider the following 215-residue polypeptide: 3-isopropylmalate dehydratase small subunit (215 aa).

It belongs to the LeuD family. LeuD type 1 subfamily. In terms of assembly, heterodimer of LeuC and LeuD.

It carries out the reaction (2R,3S)-3-isopropylmalate = (2S)-2-isopropylmalate. Its pathway is amino-acid biosynthesis; L-leucine biosynthesis; L-leucine from 3-methyl-2-oxobutanoate: step 2/4. Functionally, catalyzes the isomerization between 2-isopropylmalate and 3-isopropylmalate, via the formation of 2-isopropylmaleate. This Acinetobacter baumannii (strain AB307-0294) protein is 3-isopropylmalate dehydratase small subunit.